Here is a 343-residue protein sequence, read N- to C-terminus: KRR1 small subunit processome component homolog (343 aa).

In terms of domain architecture, KH spans 125–193 (DIIKIGNLVH…VRDIVVETMN (69 aa)). Over residues 232–245 (NISKRKQPKVKKAK) the composition is skewed to basic residues. The segment at 232 to 343 (NISKRKQPKV…KLLKANKKKV (112 aa)) is disordered. A coiled-coil region spans residues 270 to 302 (FLNKEQKQAKRQQERSAKQADAAKRQDERRNKD). The segment covering 271-302 (LNKEQKQAKRQQERSAKQADAAKRQDERRNKD) has biased composition (basic and acidic residues). Residues 331 to 343 (LKAKLLKANKKKV) are compositionally biased toward basic residues.

The protein belongs to the KRR1 family. Monomer. Component of the ribosomal small subunit (SSU) processome.

The protein localises to the nucleus. It is found in the nucleolus. Functionally, required for 40S ribosome biogenesis. Involved in nucleolar processing of pre-18S ribosomal RNA and ribosome assembly. Binds to RNA. Required for female germline development, cell viability during eye development and for survival of dividing cells and epithelial cells during early wing disk development. The polypeptide is KRR1 small subunit processome component homolog (Drosophila ananassae (Fruit fly)).